The sequence spans 241 residues: Small ribosomal subunit protein uS3 (241 aa).

Residues 39-107 (MRKFVMDELK…ETHLNIVEVR (69 aa)) form the KH type-2 domain. The tract at residues 214 to 241 (ASERRALEGDAQGPASRDRDRDRRRDNA) is disordered. A compositionally biased stretch (basic and acidic residues) spans 229-241 (SRDRDRDRRRDNA).

It belongs to the universal ribosomal protein uS3 family. As to quaternary structure, part of the 30S ribosomal subunit. Forms a tight complex with proteins S10 and S14.

In terms of biological role, binds the lower part of the 30S subunit head. Binds mRNA in the 70S ribosome, positioning it for translation. This is Small ribosomal subunit protein uS3 from Rhizobium rhizogenes (strain K84 / ATCC BAA-868) (Agrobacterium radiobacter).